The sequence spans 92 residues: MTAAFDRYVSFKNADWEGKSQRVMERLQIHIDAAQNPFWAYFAQKRTELNQKQGLDDLRVLHNYLPTLREILEDNGDQETLAMLEDLEVTCM.

The protein belongs to the CowN family.

Is required to sustain N(2)-dependent growth in the presence of low levels of carbon monoxide (CO). Probably acts by protecting the N(2) fixation ability of the nitrogenase complex, which is inactivated in the presence of CO. The sequence is that of N(2)-fixation sustaining protein CowN from Rhodopseudomonas palustris (strain BisA53).